Here is a 454-residue protein sequence, read N- to C-terminus: Glutamyl-tRNA reductase (454 aa).

Substrate contacts are provided by residues 49–52, Ser-109, 114–116, and Gln-120; these read TCNR and ETQ. Cys-50 (nucleophile) is an active-site residue. An NADP(+)-binding site is contributed by 189 to 194; sequence GAGKMS. The segment covering 432-442 has biased composition (basic and acidic residues); the sequence is DHAEQSWKEGQ. The segment at 432–454 is disordered; sequence DHAEQSWKEGQRPSLNQGMALRT.

This sequence belongs to the glutamyl-tRNA reductase family. In terms of assembly, homodimer.

The catalysed reaction is (S)-4-amino-5-oxopentanoate + tRNA(Glu) + NADP(+) = L-glutamyl-tRNA(Glu) + NADPH + H(+). It participates in porphyrin-containing compound metabolism; protoporphyrin-IX biosynthesis; 5-aminolevulinate from L-glutamyl-tRNA(Glu): step 1/2. Functionally, catalyzes the NADPH-dependent reduction of glutamyl-tRNA(Glu) to glutamate 1-semialdehyde (GSA). The polypeptide is Glutamyl-tRNA reductase (Shouchella clausii (strain KSM-K16) (Alkalihalobacillus clausii)).